The sequence spans 212 residues: 3-isopropylmalate dehydratase small subunit (212 aa).

This sequence belongs to the LeuD family. LeuD type 1 subfamily. Heterodimer of LeuC and LeuD.

It carries out the reaction (2R,3S)-3-isopropylmalate = (2S)-2-isopropylmalate. Its pathway is amino-acid biosynthesis; L-leucine biosynthesis; L-leucine from 3-methyl-2-oxobutanoate: step 2/4. Functionally, catalyzes the isomerization between 2-isopropylmalate and 3-isopropylmalate, via the formation of 2-isopropylmaleate. The chain is 3-isopropylmalate dehydratase small subunit from Thioalkalivibrio sulfidiphilus (strain HL-EbGR7).